The following is a 974-amino-acid chain: Leucine-rich repeat receptor-like kinase protein SUNN (974 aa).

An N-terminal signal peptide occupies residues 1–20 (MKNITCYLLLLCMLFTTCYS). Residues N75, N104, N123, and N136 are each glycosylated (N-linked (GlcNAc...) asparagine). LRR repeat units lie at residues 92 to 116 (LNML…LSKL), 117 to 141 (TSLR…TFGM), 143 to 165 (KLEA…IVSL), 166 to 188 (MKLK…SYSE), 189 to 213 (FQKL…LSKL), 238 to 262 (IKSL…LGNL), 263 to 286 (ENLD…LSSM), 288 to 309 (SLMS…TFSK), 310 to 334 (LKNL…IGDL), 335 to 358 (PNLE…LGSN), 360 to 382 (KFIY…LCKS), 383 to 406 (KKLK…IGPC), 407 to 430 (KSLE…IFQL), 431 to 454 (PSVQ…ISGN), 456 to 477 (LGNL…MKNL), 478 to 501 (RSLQ…VFAL), 503 to 525 (VLTR…VTQC), 527 to 549 (SLTA…MKNL), 550 to 573 (KVLS…IRFM), and 574 to 598 (TSLT…QFLV). N-linked (GlcNAc...) asparagine glycosylation is found at N250 and N274. N312 and N346 each carry an N-linked (GlcNAc...) asparagine glycan. N-linked (GlcNAc...) asparagine glycans are attached at residues N508 and N513. N-linked (GlcNAc...) asparagine glycans are attached at residues N556 and N585. The helical transmembrane segment at 635-655 (VVIAIVFATAVLMVIVTLHMM) threads the bilayer. The Protein kinase domain maps to 685-972 (LKEENIIGKG…PPHSTSHNLI (288 aa)). ATP is bound by residues 691-699 (IGKGGAGIV) and K713. The Proton acceptor role is filled by D810.

The protein belongs to the protein kinase superfamily. Ser/Thr protein kinase family. As to expression, expressed in roots and shoots. Expressed in the vasculature of leaves, petioles, stems and roots.

The protein resides in the cell membrane. It carries out the reaction L-seryl-[protein] + ATP = O-phospho-L-seryl-[protein] + ADP + H(+). It catalyses the reaction L-threonyl-[protein] + ATP = O-phospho-L-threonyl-[protein] + ADP + H(+). LRR receptor kinase involved in the regulation of root growth and root nodule organogenesis. Involved in long distance nodulation signaling events. Involved in the autoregulation of nodulation (AON), a long distance systemic signaling from root to shoot and back again, which allows legumes to limit the number of root nodules formed based on available nitrogen and previous rhizobial colonization. Acts from shoot to root to control AON. Interacts with CLE12 and CLE13 signaling to control nodule numbers. Required for the modulation of shoot-to-root auxin transport in response to altered nitrogen tissue concentrations and in the absence of rhizobia. Shoot-to-root auxin transport influences lateral root density and length. Involved in the regulation of root colonization by arbuscular mycorrhizal (AM) fungi. Interacts with CLE33 and CL53 signaling to repress strigolactone biosynthetic genes and strigolactone content in the roots, and consequently reduces the promotion of further colonization by AM fungi. This chain is Leucine-rich repeat receptor-like kinase protein SUNN, found in Medicago truncatula (Barrel medic).